We begin with the raw amino-acid sequence, 194 residues long: Cysteine and glycine-rich protein 3 (194 aa).

The segment at 1–5 is interaction with TCAP; that stretch reads MPNWG. Positions 10–61 constitute an LIM zinc-binding 1 domain; that stretch reads CGACEKTVYHAEEIQCNGRSFHKTCFHCMACRKALDSTTVAAHESEIYCKVC. Residues 64–69 carry the Nuclear localization signal motif; the sequence is RRYGPK. Residues 94-105 are interaction with CLF2 and isoform 2; sequence QSPKPARSVTTS. Phosphoserine is present on residues serine 95 and serine 153. In terms of domain architecture, LIM zinc-binding 2 spans 120–171; sequence CPRCGKSVYAAEKVMGGGKPWHKTCFRCAICGKSLESTNVTDKDGELYCKVC.

In terms of assembly, self-associates. Oligomeric in the cytoplasm and monomeric in the nucleus. Homooligomers preferentially form along the actin cytoskeleton. Isoform 2 interacts with isoform 1. Isoform 1 but not isoform 2 interacts with MYOD1 and MYOG. Isoform 1 interacts with TCAP, ACTN2 and NRAP. Isoform 2 interacts with TCAP and alpha-actinin. Interacts with LDHD. Interacts (via N-terminus)with GLRX3 (via C-terminus) and PPP3CA; GLRX3 and calcineurin compete for interaction with CSRP3. Interacts with MYF6. Interacts with CFL2; the stoichiometry influences F-actin depolymerization and possibly two molecules of CFL2 can interact with one molecule of CSRP3 resulting in the highest functional impact; the interaction is stronger with phosphorylated CFL2. Post-translationally, phosphorylated by PKC/PRKCA. As to expression, cardiac and slow-twitch skeletal muscles. Isoform 2 is expressed in striated muscle. Isoform 2 is specifically expressed at higher levels in patients with neuromuscular diseases, such as limb-girdle muscular dystrophy 2A (LGMD2A), Duchenne muscular dystrophy (DMD) and dermatomyositis.

The protein resides in the nucleus. The protein localises to the cytoplasm. It is found in the cytoskeleton. Its subcellular location is the myofibril. It localises to the sarcomere. The protein resides in the z line. Functionally, positive regulator of myogenesis. Acts as a cofactor for myogenic bHLH transcription factors such as MYOD1, and probably MYOG and MYF6. Enhances the DNA-binding activity of the MYOD1:TCF3 isoform E47 complex and may promote formation of a functional MYOD1:TCF3 isoform E47:MEF2A complex involved in myogenesis. Plays a crucial and specific role in the organization of cytosolic structures in cardiomyocytes. Could play a role in mechanical stretch sensing. May be a scaffold protein that promotes the assembly of interacting proteins at Z-line structures. It is essential for calcineurin anchorage to the Z line. Required for stress-induced calcineurin-NFAT activation. The role in regulation of cytoskeleton dynamics by association with CFL2 is reported conflictingly: Shown to enhance CFL2-mediated F-actin depolymerization dependent on the CSRP3:CFL2 molecular ratio, and also shown to reduce the ability of CLF1 and CFL2 to enhance actin depolymerization. Proposed to contribute to the maintenance of muscle cell integrity through an actin-based mechanism. Can directly bind to actin filaments, cross-link actin filaments into bundles without polarity selectivity and protect them from dilution- and cofilin-mediated depolymerization; the function seems to involve its self-association. In vitro can inhibit PKC/PRKCA activity. Proposed to be involved in cardiac stress signaling by down-regulating excessive PKC/PRKCA signaling. May play a role in early sarcomere organization. Overexpression in myotubes negatively regulates myotube differentiation. By association with isoform 1 and thus changing the CSRP3 isoform 1:CFL2 stoichiometry is proposed to down-regulate CFL2-mediated F-actin depolymerization. This chain is Cysteine and glycine-rich protein 3 (CSRP3), found in Homo sapiens (Human).